A 51-amino-acid chain; its full sequence is Large ribosomal subunit protein eL39 (51 aa).

Belongs to the eukaryotic ribosomal protein eL39 family.

The chain is Large ribosomal subunit protein eL39 (rpl39e) from Thermoplasma acidophilum (strain ATCC 25905 / DSM 1728 / JCM 9062 / NBRC 15155 / AMRC-C165).